Here is a 53-residue protein sequence, read N- to C-terminus: Conotoxin Cal9.2f (53 aa).

The propeptide occupies 1–6; it reads KKGVTL. 3 disulfide bridges follow: C15–C32, C20–C42, and C22–C47.

As to expression, expressed by the venom duct.

It is found in the secreted. Probable neurotoxin with unknown target. Possibly targets ion channels. This Californiconus californicus (California cone) protein is Conotoxin Cal9.2f.